A 162-amino-acid polypeptide reads, in one-letter code: NADH-quinone oxidoreductase subunit I (162 aa).

2 4Fe-4S ferredoxin-type domains span residues 54–83 (RRYE…IESE) and 93–122 (TRYD…ETQI). Positions 63, 66, 69, 73, 102, 105, 108, and 112 each coordinate [4Fe-4S] cluster.

This sequence belongs to the complex I 23 kDa subunit family. NDH-1 is composed of 14 different subunits. Subunits NuoA, H, J, K, L, M, N constitute the membrane sector of the complex. The cofactor is [4Fe-4S] cluster.

It localises to the cell inner membrane. The catalysed reaction is a quinone + NADH + 5 H(+)(in) = a quinol + NAD(+) + 4 H(+)(out). Functionally, NDH-1 shuttles electrons from NADH, via FMN and iron-sulfur (Fe-S) centers, to quinones in the respiratory chain. The immediate electron acceptor for the enzyme in this species is believed to be ubiquinone. Couples the redox reaction to proton translocation (for every two electrons transferred, four hydrogen ions are translocated across the cytoplasmic membrane), and thus conserves the redox energy in a proton gradient. In Burkholderia mallei (strain NCTC 10247), this protein is NADH-quinone oxidoreductase subunit I.